Consider the following 446-residue polypeptide: Signal recognition particle protein (446 aa).

Residues 106–113 (GLQGSGKT), 188–192 (DTAGR), and 246–249 (SKLD) each bind GTP.

It belongs to the GTP-binding SRP family. SRP54 subfamily. Part of the signal recognition particle protein translocation system, which is composed of SRP and FtsY.

Its subcellular location is the cytoplasm. The catalysed reaction is GTP + H2O = GDP + phosphate + H(+). In terms of biological role, involved in targeting and insertion of nascent membrane proteins into the cytoplasmic membrane. Binds to the hydrophobic signal sequence of the ribosome-nascent chain (RNC) as it emerges from the ribosomes. The SRP-RNC complex is then targeted to the cytoplasmic membrane where it interacts with the SRP receptor FtsY. In Mycoplasma genitalium (strain ATCC 33530 / DSM 19775 / NCTC 10195 / G37) (Mycoplasmoides genitalium), this protein is Signal recognition particle protein.